The chain runs to 136 residues: Translation initiation factor 5A (136 aa).

A Hypusine modification is found at lysine 37.

It belongs to the eIF-5A family.

Its subcellular location is the cytoplasm. Its function is as follows. Functions by promoting the formation of the first peptide bond. This Thermococcus gammatolerans (strain DSM 15229 / JCM 11827 / EJ3) protein is Translation initiation factor 5A (eIF5A).